The following is a 588-amino-acid chain: Tetratricopeptide repeat protein 39B (588 aa).

3 TPR repeats span residues 294–327, 485–518, and 526–559; these read SIILFYAARIDILKGRFEQAQETFQKCIVSQQEW, CLVQLLKGVCLKHLGRLLQAELCFNQVIQSEKRV, and PFTFYELGLLYKDQGDRDKAIRYIETAKSNYKDY.

This sequence belongs to the TTC39 family.

Its function is as follows. May be involved in lipid metabolism. This chain is Tetratricopeptide repeat protein 39B (ttc39b), found in Xenopus tropicalis (Western clawed frog).